A 59-amino-acid chain; its full sequence is Protein translocase subunit SecE (59 aa).

Residues 30-50 traverse the membrane as a helical segment; that stretch reads ITVISTVIFFVIFFALLDTGI.

This sequence belongs to the SecE/SEC61-gamma family. In terms of assembly, component of the Sec protein translocase complex. Heterotrimer consisting of SecY, SecE and SecG subunits. The heterotrimers can form oligomers, although 1 heterotrimer is thought to be able to translocate proteins. Interacts with the ribosome. Interacts with SecDF, and other proteins may be involved. Interacts with SecA.

It localises to the cell membrane. Functionally, essential subunit of the Sec protein translocation channel SecYEG. Clamps together the 2 halves of SecY. May contact the channel plug during translocation. The protein is Protein translocase subunit SecE of Bacillus subtilis (strain 168).